The primary structure comprises 144 residues: 3-dehydroquinate dehydratase (144 aa).

The active-site Proton acceptor is the Y24. 3 residues coordinate substrate: N76, H82, and D89. Catalysis depends on H102, which acts as the Proton donor. Substrate contacts are provided by residues 103 to 104 (LS) and R113.

This sequence belongs to the type-II 3-dehydroquinase family. As to quaternary structure, homododecamer.

The enzyme catalyses 3-dehydroquinate = 3-dehydroshikimate + H2O. The protein operates within metabolic intermediate biosynthesis; chorismate biosynthesis; chorismate from D-erythrose 4-phosphate and phosphoenolpyruvate: step 3/7. Functionally, catalyzes a trans-dehydration via an enolate intermediate. This Bordetella bronchiseptica (strain ATCC BAA-588 / NCTC 13252 / RB50) (Alcaligenes bronchisepticus) protein is 3-dehydroquinate dehydratase.